A 1404-amino-acid polypeptide reads, in one-letter code: Microtubule organization protein AKNA (1404 aa).

2 disordered regions span residues 1-304 (MASS…VSPL) and 317-382 (QHKQ…RPLI). S51 is subject to Phosphoserine. Over residues 70 to 91 (WDPDMQDSEESSGEETEADDAS) the composition is skewed to acidic residues. Over residues 185 to 203 (KSWSSGTVSLRQPSDSLGS) the composition is skewed to polar residues. Phosphoserine is present on S302. S485 and S520 each carry phosphoserine. The interval 494–549 (AEWWPDPAQDPQASEATGWPFPRTDLSPSSSPGVATPGRLPQSQGIATDQPSTGQT) is disordered. The segment covering 534 to 549 (PQSQGIATDQPSTGQT) has biased composition (polar residues). S617 is modified (phosphoserine). Residues 645-659 (MDQTQRETEPCRPDL) are compositionally biased toward basic and acidic residues. Residues 645–708 (MDQTQRETEP…TSPGSSCTLP (64 aa)) form a disordered region. Composition is skewed to polar residues over residues 660 to 674 (QDST…QSAH) and 686 to 707 (DGQT…SCTL). S750 and S753 each carry phosphoserine. Residues 754–787 (LPEALRDEDEDDLEEEEEEQDHQGPLEVDSPATA) are PEST. Disordered stretches follow at residues 755–1038 (PEAL…STAN) and 1085–1185 (HSTQ…RERV). A compositionally biased stretch (acidic residues) spans 759-773 (RDEDEDDLEEEEEEQ). The span at 803-813 (TQAEESHRDAT) shows a compositional bias: basic and acidic residues. Phosphoserine is present on residues S831 and S860. Positions 885–906 (HTEEPWMVSPETDSGFVGSETS) are PEST. Polar residues-rich tracts occupy residues 903 to 914 (SETSIVSPFTQT), 921 to 933 (HVST…QHLT), and 963 to 974 (SRTQQHFSSLSS). Phosphoserine is present on S971. Residues 1015–1029 (TSPDSAPAPTAASTP) show a composition bias toward low complexity. The segment covering 1085–1098 (HSTQTQEKLGSSPS) has biased composition (polar residues). Positions 1088–1096 (QTQEKLGSS) form a DNA-binding region, a.T hook. Phosphoserine occurs at positions 1144 and 1145. A compositionally biased stretch (basic and acidic residues) spans 1155–1167 (SSEKSRTFEEHPE). Phosphoserine is present on S1200. Disordered stretches follow at residues 1208 to 1235 (SGTP…TTRG) and 1253 to 1286 (SAEA…QTGS). Residues 1221 to 1235 (TQDTGSAVSRDTTRG) are compositionally biased toward polar residues. 3 positions are modified to phosphoserine: S1339, S1352, and S1389.

It belongs to the AKNA family. In terms of assembly, interacts with DCTN1. Interacts with MAPRE1/EB1. Interacts with ODF2. Interacts with CAMSAP3. Post-translationally, phosphorylated; phosphorylation regulates dissociation from and reassembly at the centrosome. In terms of tissue distribution, expressed in neural stem cells isolated at the peak of subventricular zone (SVZ): localizes at the subdistal appendages of the mother centriole in specific subtypes of neural stem cells and in almost all basal progenitors.

It is found in the cytoplasm. It localises to the cytoskeleton. The protein localises to the microtubule organizing center. Its subcellular location is the centrosome. The protein resides in the centriole. It is found in the nucleus. Functionally, centrosomal protein that plays a key role in cell delamination by regulating microtubule organization. Required for the delamination and retention of neural stem cells from the subventricular zone during neurogenesis. Also regulates the epithelial-to-mesenchymal transition in other epithelial cells. Acts by increasing centrosomal microtubule nucleation and recruiting nucleation factors and minus-end stabilizers, thereby destabilizing microtubules at the adherens junctions and mediating constriction of the apical endfoot. In addition, may also act as a transcription factor that specifically activates the expression of the CD40 receptor and its ligand CD40L/CD154, two cell surface molecules on lymphocytes that are critical for antigen-dependent-B-cell development. Binds to A/T-rich promoters. It is unclear how it can both act as a microtubule organizer and as a transcription factor; additional evidences are required to reconcile these two apparently contradictory functions. This Mus musculus (Mouse) protein is Microtubule organization protein AKNA.